The sequence spans 619 residues: Very-long-chain aldehyde decarbonylase GL1-1 (619 aa).

5 helical membrane passes run 44–64, 93–113, 123–143, 190–210, and 322–342; these read LLLL…WSSF, DNFL…FPSL, GLAV…YAAH, AAAC…VLGF, and PFLL…WAWS. The region spanning 129 to 269 is the Fatty acid hydroxylase domain; sequence LLHVAATEPL…MPLFDLIGGT (141 aa).

The protein belongs to the sterol desaturase family. In terms of assembly, homodimer.

Its subcellular location is the endoplasmic reticulum membrane. The enzyme catalyses a long-chain fatty aldehyde + 2 NADPH + O2 + H(+) = a long-chain alkane + formate + 2 NADP(+) + H2O. Functionally, aldehyde decarbonylase involved in the conversion of aldehydes to alkanes. Core component of a very-long-chain alkane synthesis complex. The polypeptide is Very-long-chain aldehyde decarbonylase GL1-1 (Oryza sativa subsp. indica (Rice)).